We begin with the raw amino-acid sequence, 232 residues long: Octanoyltransferase (232 aa).

The region spanning 33-216 is the BPL/LPL catalytic domain; that stretch reads GRAQDTVILL…HLVRALSNGS (184 aa). Residues 71–78, 146–148, and 159–161 each bind substrate; these read RGGRITWH, AIG, and GFA. Catalysis depends on Cys-177, which acts as the Acyl-thioester intermediate.

Belongs to the LipB family.

It is found in the cytoplasm. The enzyme catalyses octanoyl-[ACP] + L-lysyl-[protein] = N(6)-octanoyl-L-lysyl-[protein] + holo-[ACP] + H(+). Its pathway is protein modification; protein lipoylation via endogenous pathway; protein N(6)-(lipoyl)lysine from octanoyl-[acyl-carrier-protein]: step 1/2. Catalyzes the transfer of endogenously produced octanoic acid from octanoyl-acyl-carrier-protein onto the lipoyl domains of lipoate-dependent enzymes. Lipoyl-ACP can also act as a substrate although octanoyl-ACP is likely to be the physiological substrate. The sequence is that of Octanoyltransferase from Clavibacter sepedonicus (Clavibacter michiganensis subsp. sepedonicus).